Consider the following 916-residue polypeptide: Ubiquitin carboxyl-terminal hydrolase 20 (916 aa).

The UBP-type zinc-finger motif lies at 6 to 111 (DLCPHLDCIG…SSSARLSEQD (106 aa)). 12 residues coordinate Zn(2+): Cys-8, His-10, Cys-30, Cys-33, Cys-43, Cys-48, Cys-53, His-60, His-64, His-70, Cys-83, and Cys-86. Phosphoserine occurs at positions 112, 132, and 134. The USP domain maps to 145–687 (TGMKNLGNSC…EAYVLFYRKS (543 aa)). Cys-154 acts as the Nucleophile in catalysis. The tract at residues 258-420 (LTDARDSDSS…PPRASPVRMG (163 aa)) is disordered. At Thr-259 the chain carries Phosphothreonine. Residues 260 to 280 (DARDSDSSDTDERRDGDRSPS) show a composition bias toward basic and acidic residues. The residue at position 306 (Ser-306) is a Phosphoserine. The span at 317–333 (EAGRAISEKERMKDRKF) shows a compositional bias: basic and acidic residues. Ser-369 carries the post-translational modification Phosphoserine. Thr-378 carries the phosphothreonine modification. Phosphoserine is present on residues Ser-410 and Ser-415. Catalysis depends on His-645, which acts as the Proton acceptor. DUSP domains are found at residues 689–782 (EEAM…LYVC) and 791–894 (ALAK…RQSV).

Belongs to the peptidase C19 family. USP20/USP33 subfamily. Interacts with VHL, leading to its ubiquitination and subsequent degradation. Interacts with CCP110. Interacts with DIO2. Interacts with HIF1A. Interacts with ADRB2. Interacts with USP18. Ubiquitinated via a VHL-dependent pathway for proteasomal degradation.

The protein localises to the cytoplasm. The protein resides in the endoplasmic reticulum. It is found in the perinuclear region. It localises to the cytoskeleton. Its subcellular location is the microtubule organizing center. The protein localises to the centrosome. It carries out the reaction Thiol-dependent hydrolysis of ester, thioester, amide, peptide and isopeptide bonds formed by the C-terminal Gly of ubiquitin (a 76-residue protein attached to proteins as an intracellular targeting signal).. Functionally, deubiquitinating enzyme that plays a role in many cellular processes including autophagy, cellular antiviral response or membrane protein biogenesis. Attenuates TLR4-mediated NF-kappa-B signaling by cooperating with beta-arrestin-2/ARRB2 and inhibiting TRAF6 autoubiquitination. Promotes cellular antiviral responses by deconjugating 'Lys-33' and 'Lys-48'-linked ubiquitination of STING1 leading to its stabilization. Plays an essential role in autophagy induction by regulating the ULK1 stability through deubiquitination of ULK1. Acts as a positive regulator for NF-kappa-B activation by TNF-alpha through deubiquitinating 'Lys-48'-linked polyubiquitination of SQSTM1, leading to its increased stability. Acts as a regulator of G-protein coupled receptor (GPCR) signaling by mediating the deubiquitination beta-2 adrenergic receptor (ADRB2). Plays a central role in ADRB2 recycling and resensitization after prolonged agonist stimulation by constitutively binding ADRB2, mediating deubiquitination of ADRB2 and inhibiting lysosomal trafficking of ADRB2. Upon dissociation, it is probably transferred to the translocated beta-arrestins, possibly leading to beta-arrestins deubiquitination and disengagement from ADRB2. This suggests the existence of a dynamic exchange between the ADRB2 and beta-arrestins. Deubiquitinates DIO2, thereby regulating thyroid hormone regulation. Deubiquitinates HIF1A, leading to stabilize HIF1A and enhance HIF1A-mediated activity. Deubiquitinates MCL1, a pivotal member of the anti-apoptotic Bcl-2 protein family to regulate its stability. Within the endoplasmic reticulum, participates with USP33 in the rescue of post-translationally targeted membrane proteins that are inappropriately ubiquitinated by the cytosolic protein quality control in the cytosol. The sequence is that of Ubiquitin carboxyl-terminal hydrolase 20 (Usp20) from Mus musculus (Mouse).